A 292-amino-acid polypeptide reads, in one-letter code: Lipoyl synthase (292 aa).

[4Fe-4S] cluster is bound by residues Cys-34, Cys-39, Cys-45, Cys-60, Cys-64, Cys-67, and Ser-273. In terms of domain architecture, Radical SAM core spans 46–262 (WNKKHATVMI…KYVAYSKGFL (217 aa)).

It belongs to the radical SAM superfamily. Lipoyl synthase family. [4Fe-4S] cluster serves as cofactor.

It is found in the cytoplasm. The enzyme catalyses [[Fe-S] cluster scaffold protein carrying a second [4Fe-4S](2+) cluster] + N(6)-octanoyl-L-lysyl-[protein] + 2 oxidized [2Fe-2S]-[ferredoxin] + 2 S-adenosyl-L-methionine + 4 H(+) = [[Fe-S] cluster scaffold protein] + N(6)-[(R)-dihydrolipoyl]-L-lysyl-[protein] + 4 Fe(3+) + 2 hydrogen sulfide + 2 5'-deoxyadenosine + 2 L-methionine + 2 reduced [2Fe-2S]-[ferredoxin]. The protein operates within protein modification; protein lipoylation via endogenous pathway; protein N(6)-(lipoyl)lysine from octanoyl-[acyl-carrier-protein]: step 2/2. Its function is as follows. Catalyzes the radical-mediated insertion of two sulfur atoms into the C-6 and C-8 positions of the octanoyl moiety bound to the lipoyl domains of lipoate-dependent enzymes, thereby converting the octanoylated domains into lipoylated derivatives. The protein is Lipoyl synthase of Ehrlichia ruminantium (strain Welgevonden).